The sequence spans 365 residues: 3-isopropylmalate dehydrogenase (365 aa).

80–91 (GPKWGTGSVRPE) serves as a coordination point for NAD(+). Positions 98, 108, 137, and 226 each coordinate substrate. Mg(2+) is bound by residues Asp226, Asp251, and Asp255. Position 290–301 (290–301 (GSAPDLPKGKVN)) interacts with NAD(+).

It belongs to the isocitrate and isopropylmalate dehydrogenases family. Homodimer. Mg(2+) is required as a cofactor. Requires Mn(2+) as cofactor.

Its subcellular location is the cytoplasm. The catalysed reaction is (2R,3S)-3-isopropylmalate + NAD(+) = 4-methyl-2-oxopentanoate + CO2 + NADH. It functions in the pathway amino-acid biosynthesis; L-leucine biosynthesis; L-leucine from 3-methyl-2-oxobutanoate: step 3/4. Functionally, catalyzes the oxidation of 3-carboxy-2-hydroxy-4-methylpentanoate (3-isopropylmalate) to 3-carboxy-4-methyl-2-oxopentanoate. The product decarboxylates to 4-methyl-2 oxopentanoate. This Maudiozyma exigua (Yeast) protein is 3-isopropylmalate dehydrogenase (LEU2).